A 303-amino-acid polypeptide reads, in one-letter code: Ribosomal RNA small subunit methyltransferase H (303 aa).

S-adenosyl-L-methionine contacts are provided by residues 36-38, Asp55, Phe81, Asp101, and Gln108; that span reads CGH.

This sequence belongs to the methyltransferase superfamily. RsmH family.

The protein resides in the cytoplasm. It carries out the reaction cytidine(1402) in 16S rRNA + S-adenosyl-L-methionine = N(4)-methylcytidine(1402) in 16S rRNA + S-adenosyl-L-homocysteine + H(+). Its function is as follows. Specifically methylates the N4 position of cytidine in position 1402 (C1402) of 16S rRNA. In Aster yellows witches'-broom phytoplasma (strain AYWB), this protein is Ribosomal RNA small subunit methyltransferase H.